Consider the following 156-residue polypeptide: Small ribosomal subunit protein uS7A/uS7B (156 aa).

The protein belongs to the universal ribosomal protein uS7 family. Part of the 30S ribosomal subunit. Contacts proteins S9 and S11.

Its function is as follows. One of the primary rRNA binding proteins, it binds directly to 16S rRNA where it nucleates assembly of the head domain of the 30S subunit. Is located at the subunit interface close to the decoding center, probably blocks exit of the E-site tRNA. This Cereibacter sphaeroides (strain ATCC 17029 / ATH 2.4.9) (Rhodobacter sphaeroides) protein is Small ribosomal subunit protein uS7A/uS7B.